Consider the following 443-residue polypeptide: Glucose-6-phosphate isomerase (443 aa).

The active-site Proton donor is the Glu-285. Active-site residues include His-306 and Lys-420.

Belongs to the GPI family.

The protein localises to the cytoplasm. It carries out the reaction alpha-D-glucose 6-phosphate = beta-D-fructose 6-phosphate. Its pathway is carbohydrate biosynthesis; gluconeogenesis. The protein operates within carbohydrate degradation; glycolysis; D-glyceraldehyde 3-phosphate and glycerone phosphate from D-glucose: step 2/4. Its function is as follows. Catalyzes the reversible isomerization of glucose-6-phosphate to fructose-6-phosphate. The polypeptide is Glucose-6-phosphate isomerase (Staphylococcus aureus (strain bovine RF122 / ET3-1)).